Here is a 218-residue protein sequence, read N- to C-terminus: tRNA (guanine-N(7)-)-methyltransferase (218 aa).

The disordered stretch occupies residues 1 to 26; that stretch reads MRLKNKPWANELVEEHPESALDRPDP. Basic and acidic residues predominate over residues 13-26; sequence VEEHPESALDRPDP. The S-adenosyl-L-methionine site is built by glutamate 45, glutamate 70, aspartate 97, and aspartate 119. Residue aspartate 119 is part of the active site. A substrate-binding site is contributed by lysine 123. The segment at 125–130 is interaction with RNA; it reads RHEKRR. Substrate contacts are provided by residues aspartate 155 and 195–198; that span reads TEYE.

Belongs to the class I-like SAM-binding methyltransferase superfamily. TrmB family.

It catalyses the reaction guanosine(46) in tRNA + S-adenosyl-L-methionine = N(7)-methylguanosine(46) in tRNA + S-adenosyl-L-homocysteine. The protein operates within tRNA modification; N(7)-methylguanine-tRNA biosynthesis. Its function is as follows. Catalyzes the formation of N(7)-methylguanine at position 46 (m7G46) in tRNA. In Lactobacillus delbrueckii subsp. bulgaricus (strain ATCC 11842 / DSM 20081 / BCRC 10696 / JCM 1002 / NBRC 13953 / NCIMB 11778 / NCTC 12712 / WDCM 00102 / Lb 14), this protein is tRNA (guanine-N(7)-)-methyltransferase.